The sequence spans 214 residues: METQKRHEYHSVCHTCRRTENTRMKVKMMSSSNRVLVIALALTLYIVEVASAETLCGGELVDALQFVCEDRGFYFSRPTSRSNSRRSQNRGIVEECCFRSCDLNLLEQYCAKPAKSERDVSATSLQIIPMVPTIKQDVPRKHVTVKYSKYEAWQRKAAQRLRRGVPAILRARKFRRQAVKIKAQEQAMFHRPLITLPSKLPPVLPPTDNYVSHN.

The interval E48–T79 is b. 3 disulfide bridges follow: C56–C97, C68–C110, and C96–C101. The segment at S80–R90 is c. The interval G91–A111 is a. The d stretch occupies residues K112 to E117. A propeptide spans R118–N214 (e peptide).

It belongs to the insulin family.

Its subcellular location is the secreted. Its function is as follows. The insulin-like growth factors, isolated from plasma, are structurally and functionally related to insulin but have a much higher growth-promoting activity. Acts as a ligand for integrin which is required for IGF2 signaling. This Oncorhynchus mykiss (Rainbow trout) protein is Insulin-like growth factor 2.